The primary structure comprises 193 residues: ATP-dependent Clp protease proteolytic subunit (193 aa).

The active-site Nucleophile is the serine 98. Histidine 123 is an active-site residue.

Belongs to the peptidase S14 family. Fourteen ClpP subunits assemble into 2 heptameric rings which stack back to back to give a disk-like structure with a central cavity, resembling the structure of eukaryotic proteasomes.

The protein localises to the cytoplasm. The catalysed reaction is Hydrolysis of proteins to small peptides in the presence of ATP and magnesium. alpha-casein is the usual test substrate. In the absence of ATP, only oligopeptides shorter than five residues are hydrolyzed (such as succinyl-Leu-Tyr-|-NHMec, and Leu-Tyr-Leu-|-Tyr-Trp, in which cleavage of the -Tyr-|-Leu- and -Tyr-|-Trp bonds also occurs).. Its function is as follows. Cleaves peptides in various proteins in a process that requires ATP hydrolysis. Has a chymotrypsin-like activity. Plays a major role in the degradation of misfolded proteins. In Histophilus somni (strain 2336) (Haemophilus somnus), this protein is ATP-dependent Clp protease proteolytic subunit.